A 98-amino-acid chain; its full sequence is Small ribosomal subunit protein bS20 (98 aa).

It belongs to the bacterial ribosomal protein bS20 family.

In terms of biological role, binds directly to 16S ribosomal RNA. This is Small ribosomal subunit protein bS20 from Kosmotoga olearia (strain ATCC BAA-1733 / DSM 21960 / TBF 19.5.1).